The following is a 207-amino-acid chain: Small ribosomal subunit protein uS4 (207 aa).

A disordered region spans residues 31–55; it reads KCKLDSKPGQHGRTSGARTSDYGTQ. The segment covering 42–53 has biased composition (polar residues); it reads GRTSGARTSDYG. One can recognise an S4 RNA-binding domain in the interval 97-160; it reads SRLDNVVYRM…KKQARIIEAL (64 aa).

This sequence belongs to the universal ribosomal protein uS4 family. In terms of assembly, part of the 30S ribosomal subunit. Contacts protein S5. The interaction surface between S4 and S5 is involved in control of translational fidelity.

Its function is as follows. One of the primary rRNA binding proteins, it binds directly to 16S rRNA where it nucleates assembly of the body of the 30S subunit. Functionally, with S5 and S12 plays an important role in translational accuracy. This chain is Small ribosomal subunit protein uS4, found in Burkholderia vietnamiensis (strain G4 / LMG 22486) (Burkholderia cepacia (strain R1808)).